The primary structure comprises 805 residues: Phenylalanine--tRNA ligase beta subunit (805 aa).

In terms of domain architecture, tRNA-binding spans 39-148 (APPFTGVVVT…AALRPGTDIR (110 aa)). The 76-residue stretch at 399–474 (PVREPVRMRL…RVYGFERIPD (76 aa)) folds into the B5 domain. 4 residues coordinate Mg(2+): D452, D458, E461, and E462. The 102-residue stretch at 703–804 (SRQPVVVRDL…LVAAHNARQR (102 aa)) folds into the FDX-ACB domain.

Belongs to the phenylalanyl-tRNA synthetase beta subunit family. Type 1 subfamily. Tetramer of two alpha and two beta subunits. Mg(2+) serves as cofactor.

It localises to the cytoplasm. It carries out the reaction tRNA(Phe) + L-phenylalanine + ATP = L-phenylalanyl-tRNA(Phe) + AMP + diphosphate + H(+). This Bordetella pertussis (strain Tohama I / ATCC BAA-589 / NCTC 13251) protein is Phenylalanine--tRNA ligase beta subunit.